The primary structure comprises 137 residues: Phosphoribosyl-AMP cyclohydrolase (137 aa).

Position 84 (Asp84) interacts with Mg(2+). Cys85 is a binding site for Zn(2+). Positions 86 and 88 each coordinate Mg(2+). Residues Cys101 and Cys108 each contribute to the Zn(2+) site.

The protein belongs to the PRA-CH family. Homodimer. Requires Mg(2+) as cofactor. Zn(2+) serves as cofactor.

Its subcellular location is the cytoplasm. It catalyses the reaction 1-(5-phospho-beta-D-ribosyl)-5'-AMP + H2O = 1-(5-phospho-beta-D-ribosyl)-5-[(5-phospho-beta-D-ribosylamino)methylideneamino]imidazole-4-carboxamide. It participates in amino-acid biosynthesis; L-histidine biosynthesis; L-histidine from 5-phospho-alpha-D-ribose 1-diphosphate: step 3/9. Its function is as follows. Catalyzes the hydrolysis of the adenine ring of phosphoribosyl-AMP. In Chlorobium chlorochromatii (strain CaD3), this protein is Phosphoribosyl-AMP cyclohydrolase.